A 375-amino-acid chain; its full sequence is MSDQQTCVIDNGSGVVKAGFAGEDAPRAVFPSIVGRPKNVSALIGVDSASEYLGDEAQQKRGVLKIFYPIEHGIVKDWDDMEKIWNHTFYVELRVQPDEHPILLTEAPLNPKTNREKMTQIMFETFNVPALYVVIQAVLSLYSAGSTTGIVCDAGDGVTHTVPIYEGFSIPHAVSRIQLAGRDLTTFMAKLLTERGYNFTSSAELEIVRDIKEKLCFVALEYESALKQSHDSSQFEKNYELPDGKVITIGSERFRCPEYLFKPLEMNGRELDSIQDLTYKSIQECDVDVRRDLYQNIIISGGTTMNEGIGERLLKEIENRAPKSINVKVIASADRIFAVWRGGSTRTSLSTFASMWITKEDYDENGASIVHRKCI.

The protein belongs to the actin family.

It localises to the cytoplasm. The protein resides in the cytoskeleton. The catalysed reaction is ATP + H2O = ADP + phosphate + H(+). Its function is as follows. Actins are highly conserved proteins that are involved in various types of cell motility and are ubiquitously expressed in all eukaryotic cells. In Oxytricha trifallax (Sterkiella histriomuscorum), this protein is Actin, cytoplasmic.